The following is a 66-amino-acid chain: Large ribosomal subunit protein bL33c (66 aa).

The protein belongs to the bacterial ribosomal protein bL33 family.

It is found in the plastid. Its subcellular location is the chloroplast. The sequence is that of Large ribosomal subunit protein bL33c from Nicotiana sylvestris (Wood tobacco).